The following is a 148-amino-acid chain: Snaclec 3 (148 aa).

The signal sequence occupies residues 1–23; that stretch reads WGDSSSSASACWSCSSPLSGTEA. Intrachain disulfides connect cysteine 27–cysteine 38, cysteine 55–cysteine 144, and cysteine 121–cysteine 136. Residues 34–145 enclose the C-type lectin domain; sequence YDQNCYKAFE…CSGTHSFVCK (112 aa).

Belongs to the snaclec family. In terms of assembly, heterodimer; disulfide-linked. In terms of tissue distribution, expressed by the venom gland.

It localises to the secreted. Interferes with one step of hemostasis (modulation of platelet aggregation, or coagulation cascade, for example). In Echis carinatus sochureki (Saw-scaled viper), this protein is Snaclec 3.